A 626-amino-acid chain; its full sequence is DNA-directed RNA polymerase subunit beta C-terminal section (626 aa).

Positions 287 to 307 (NTKSKNTGKGSKPPRASKAQN) are disordered.

Belongs to the RNA polymerase beta chain family. As to quaternary structure, in plastids the minimal PEP RNA polymerase catalytic core is composed of four subunits: alpha, beta, beta', and beta''. When a (nuclear-encoded) sigma factor is associated with the core the holoenzyme is formed, which can initiate transcription.

It is found in the plastid. The protein localises to the chloroplast. It catalyses the reaction RNA(n) + a ribonucleoside 5'-triphosphate = RNA(n+1) + diphosphate. Functionally, DNA-dependent RNA polymerase catalyzes the transcription of DNA into RNA using the four ribonucleoside triphosphates as substrates. The chain is DNA-directed RNA polymerase subunit beta C-terminal section (rpoB2) from Chlamydomonas reinhardtii (Chlamydomonas smithii).